The primary structure comprises 284 residues: NADH-cytochrome b5 reductase 1 (284 aa).

Residues 8–28 form a helical membrane-spanning segment; sequence PFIIFATVAAIISSAVAYYFF. The region spanning 41–144 is the FAD-binding FR-type domain; the sequence is NDFQKFPLIE…RGPKGFFTYT (104 aa). FAD is bound by residues 124–139 and 150–182; these read ESKK…GPKG and SFGM…KVSL.

It belongs to the flavoprotein pyridine nucleotide cytochrome reductase family. Monomer. Component of the 2-(3-amino-3-carboxypropyl)histidine synthase complex composed of DPH1, DPH2, DPH3 and a NADH-dependent reductase, predominantly CBR1. Requires FAD as cofactor.

Its subcellular location is the mitochondrion outer membrane. It carries out the reaction 2 Fe(III)-[cytochrome b5] + NADH = 2 Fe(II)-[cytochrome b5] + NAD(+) + H(+). The enzyme catalyses 2 Fe(3+)-[Dph3] + NADH = 2 Fe(2+)-[Dph3] + NAD(+) + H(+). It functions in the pathway protein modification; peptidyl-diphthamide biosynthesis. NADH-dependent reductase for DPH3 and cytochrome b5. Required for the first step of diphthamide biosynthesis, a post-translational modification of histidine which occurs in elongation factor 2. DPH1 and DPH2 transfer a 3-amino-3-carboxypropyl (ACP) group from S-adenosyl-L-methionine (SAM) to a histidine residue, the reaction is assisted by a reduction system comprising DPH3 and a NADH-dependent reductase, predominantly CBR1. By reducing DPH3, also involved in the formation of the tRNA wobble base modification mcm5s 2U (5-methoxycarbonylmethyl-2-thiouridine), mediated by the elongator complex. The cytochrome b5/NADH cytochrome b5 reductase electron transfer system supports the catalytic activity of several sterol biosynthetic enzymes. The polypeptide is NADH-cytochrome b5 reductase 1 (CBR1) (Debaryomyces hansenii (strain ATCC 36239 / CBS 767 / BCRC 21394 / JCM 1990 / NBRC 0083 / IGC 2968) (Yeast)).